We begin with the raw amino-acid sequence, 1071 residues long: Fused isobutyryl-CoA mutase (1071 aa).

The B12-binding domain occupies 12–149 (PVRFVTSAAL…QTCDVDLTGE (138 aa)). Residue His25 coordinates adenosylcob(III)alamin. A GTPase chaperone MeaI region spans residues 153-400 (VEAVLAGERT…YQHLLELLGA (248 aa)). 203 to 208 (GSGKSS) is a binding site for GTP. Residues Ser207, Val232, Asp233, and Asp246 each contribute to the Mg(2+) site. Arg249 lines the GTP pocket. Residues Glu293 and Thr294 each coordinate Mg(2+). 340–343 (NKFE) contributes to the GTP binding site. The tract at residues 401–558 (RGLPVDEGVL…RSENLPGHFP (158 aa)) is linker. Residues Phe566, Arg601, Arg707, Tyr751, Ser800, Arg835, and Lys840 each coordinate substrate. Positions 952 and 1070 each coordinate GTP.

It belongs to the IcmF family. In terms of assembly, homodimer. Requires adenosylcob(III)alamin as cofactor. Mg(2+) is required as a cofactor.

It catalyses the reaction 2-methylpropanoyl-CoA = butanoyl-CoA. The enzyme catalyses GTP + H2O = GDP + phosphate + H(+). Catalyzes the reversible interconversion of isobutyryl-CoA and n-butyryl-CoA, using radical chemistry. Also exhibits GTPase activity, associated with its G-protein domain (MeaI) that functions as a chaperone that assists cofactor delivery and proper holo-enzyme assembly. Does not exhibit methylmalonyl-CoA mutase (MCM) activity. The protein is Fused isobutyryl-CoA mutase of Nocardia farcinica (strain IFM 10152).